We begin with the raw amino-acid sequence, 106 residues long: Large ribosomal subunit protein cL38 (106 aa).

The transit peptide at 1 to 39 (MSVSAIFGTGIVTVAASPVLRQFQVPKLGNGGGLGMVIE) directs the protein to the chloroplast. The segment at 42–70 (SRPQKKSTAHHRKTRPKKTQPWDIKRKPT) is disordered. Positions 44–59 (PQKKSTAHHRKTRPKK) are enriched in basic residues.

The protein belongs to the chloroplast-specific ribosomal protein cL38 family. As to quaternary structure, part of the 50S ribosomal subunit.

It is found in the plastid. The protein localises to the chloroplast. This Arabidopsis thaliana (Mouse-ear cress) protein is Large ribosomal subunit protein cL38 (PSRP6).